We begin with the raw amino-acid sequence, 119 residues long: Large ribosomal subunit protein uL18 (119 aa).

This sequence belongs to the universal ribosomal protein uL18 family. In terms of assembly, part of the 50S ribosomal subunit; part of the 5S rRNA/L5/L18/L25 subcomplex. Contacts the 5S and 23S rRNAs.

Its function is as follows. This is one of the proteins that bind and probably mediate the attachment of the 5S RNA into the large ribosomal subunit, where it forms part of the central protuberance. The protein is Large ribosomal subunit protein uL18 of Borreliella afzelii (strain PKo) (Borrelia afzelii).